The chain runs to 345 residues: NADH-ubiquinone oxidoreductase chain 2 (345 aa).

A run of 9 helical transmembrane segments spans residues 1-21 (MNPI…VLTM), 60-80 (FLIQ…NAHL), 110-130 (PIHF…ALII), 149-169 (IPTP…GLGG), 179-196 (MAFS…IITI), 200-222 (LTLF…MHLT), 240-260 (TANL…LSGF), 274-294 (NLVP…MFYL), and 323-343 (TTML…TPTM).

The protein belongs to the complex I subunit 2 family.

It is found in the mitochondrion inner membrane. The catalysed reaction is a ubiquinone + NADH + 5 H(+)(in) = a ubiquinol + NAD(+) + 4 H(+)(out). Its function is as follows. Core subunit of the mitochondrial membrane respiratory chain NADH dehydrogenase (Complex I) that is believed to belong to the minimal assembly required for catalysis. Complex I functions in the transfer of electrons from NADH to the respiratory chain. The immediate electron acceptor for the enzyme is believed to be ubiquinone. This is NADH-ubiquinone oxidoreductase chain 2 (MT-ND2) from Varanus melinus (Quince monitor lizard).